The primary structure comprises 368 residues: Peptide chain release factor 2 (368 aa).

Gln250 bears the N5-methylglutamine mark.

It belongs to the prokaryotic/mitochondrial release factor family. In terms of processing, methylated by PrmC. Methylation increases the termination efficiency of RF2.

Its subcellular location is the cytoplasm. Peptide chain release factor 2 directs the termination of translation in response to the peptide chain termination codons UGA and UAA. The polypeptide is Peptide chain release factor 2 (Chlamydia abortus (strain DSM 27085 / S26/3) (Chlamydophila abortus)).